The following is a 361-amino-acid chain: MAGNSIGQFFRVTTFGESHGIALGCIVDGVPPGIPLTEADLQHDLDRRRPGTSRYTTQRREPDQVKILSGVFEGVTTGTSIGLLIENTDQRSQDYGAIKDVFRPGHADYTYEQKYGQRDYRGGGRSSARETAMRVAAGAIAKKYLQQQHGVKVRGYLSQIGDVTCELKDWEQVEQNPFFCPDIDKLDALDELMRALKKEGDSIGAKVSVVAESVPVGLGEPVFDRLDADLAHALMSINAVKGVEIGDGFAVVTKRGSENRDEITPEGFQSNHAGGILGGISSGQNIVAHLALKPTSSIMVPGKTINRQGEATEMVTRGRHDPCVGIRAVPIAEAMMAIVLMDHLLRQRAQCGDVNSQVPRW.

NADP(+) contacts are provided by R48 and R54. FMN is bound by residues 125-127 (RSS), 238-239 (NA), G278, 293-297 (KPTSS), and R319.

Belongs to the chorismate synthase family. In terms of assembly, homotetramer. The cofactor is FMNH2.

It carries out the reaction 5-O-(1-carboxyvinyl)-3-phosphoshikimate = chorismate + phosphate. It functions in the pathway metabolic intermediate biosynthesis; chorismate biosynthesis; chorismate from D-erythrose 4-phosphate and phosphoenolpyruvate: step 7/7. Catalyzes the anti-1,4-elimination of the C-3 phosphate and the C-6 proR hydrogen from 5-enolpyruvylshikimate-3-phosphate (EPSP) to yield chorismate, which is the branch point compound that serves as the starting substrate for the three terminal pathways of aromatic amino acid biosynthesis. This reaction introduces a second double bond into the aromatic ring system. This is Chorismate synthase from Pectobacterium atrosepticum (strain SCRI 1043 / ATCC BAA-672) (Erwinia carotovora subsp. atroseptica).